The sequence spans 150 residues: uncharacterized protein (150 aa).

This is an uncharacterized protein from Escherichia coli O157:H7.